A 433-amino-acid polypeptide reads, in one-letter code: MGGSDHTKTSSQSTLRSLSDEISSLTDVVAGFLESNGHPERSLNSTDSVRLSDAPEDVEAARRRLVTALHEMTLLTMSPFEAVRDILLEVSSLPALHAISHFEIIDHVPLDGEISYAELARKINVPQRRLTRMLRAAMSRSIFQEPRPGYIAHNSLSAAMVHSKWLRYHAASTMENFLPAAPKFVEQIERFGDRETRCTSPAGIAFNTETDCIQYLLSQPKHQQVLVNLMKHTGEISGMGPQHLTEHYDWPKASDQIIVDVGGASGSVSRAIACGVPSVRFVVQDRADAVRQGESETPSELKDRFTFQEYDFFQTQPVKNADVYFLRWILHDWPDEDAVTILRQVALAMGPTSKMLIAERLVLLPGEGDPWDQKIATSMDMFMMAFNGSERTLEHFQSLIENTGEAIEISRVIRRPNGVQYSLIEVARKDSER.

Residues 36–55 are disordered; that stretch reads NGHPERSLNSTDSVRLSDAP. An S-adenosyl-L-methionine-binding site is contributed by Asp285. His331 (proton acceptor) is an active-site residue.

Belongs to the class I-like SAM-binding methyltransferase superfamily. Cation-independent O-methyltransferase family. COMT subfamily.

It functions in the pathway secondary metabolite biosynthesis. In terms of biological role, O-methyltransferase; part of the hps1-dma1 gene cluster that probably mediates the biosynthesis a derivative of cyclopiazonic acid (CPA). The hybrid polyketide synthase-nonribosomal peptide synthetase (PKS-NRPS) nps1 might incorporates acetyl-CoA, malonyl-CoA, and tryptophan (Trp) and utilizes a C-terminal redox-incompetent reductase domain to make and release the tryptophan tetramic acid, cyclo-acetoacetyl-L-tryptophan (c-AATrp), as the first intermediate in the pathway. In addition, the cluster also includes the tryptophan dimethylallyltransferase dma1, the FAD-dependent oxidoreductase toxD, the cytochrome P450 monooxygenase cyp3.1 and the methyltransferase DOTSEDRAFT_139328; the latter 2 being not present in all CPA-producing fungi but involved in additional modifications that occur in biosynthesis the of a range of CPA and CPA-like products. Further studies are required to clarify whether the CPA-like hps1-dma1 cluster is functional or a non-functional relic reflecting evolution of D.septosporum. In Dothistroma septosporum (strain NZE10 / CBS 128990) (Red band needle blight fungus), this protein is Hps1-dma1 cluster O-methyltransferase.